Reading from the N-terminus, the 446-residue chain is D(1A) dopamine receptor (446 aa).

At 1-23 (MRTLNTSTMEGTGLVAERDFSFR) the chain is on the extracellular side. A glycan (N-linked (GlcNAc...) asparagine) is linked at asparagine 5. A helical membrane pass occupies residues 24-49 (ILTACFLSLLILSTLLGNTLVCAAVI). At 50-60 (RFRHLRSKVTN) the chain is on the cytoplasmic side. A helical transmembrane segment spans residues 61–87 (FFVISLAVSDLLVAVLVMPWKAVAEIA). Residues 88–96 (GFWPFGSFC) lie on the Extracellular side of the membrane. A disulfide bridge links cysteine 96 with cysteine 186. Residues 97-119 (NIWVAFDIMCSTASILNLCVISV) form a helical membrane-spanning segment. Topologically, residues 120–138 (DRYWAISSPFRYERKMTPK) are cytoplasmic. The chain crosses the membrane as a helical span at residues 139 to 163 (AAFILISVAWTLSVLISFIPVQLSW). At 164–192 (HKAKPTGPSEGNATSLGKTINNCDSSLSR) the chain is on the extracellular side. Asparagine 175 carries N-linked (GlcNAc...) asparagine glycosylation. The helical transmembrane segment at 193–218 (TYAISSSLISFYIPVAIMIVTYTRIY) threads the bilayer. Residues 219–272 (RIAQKQIRRISALERAAVHAKNCQTTTGNGNPMECSQPESSFKMSFKRETKVLK) are Cytoplasmic-facing. Residues 273–299 (TLSVIMGVFVCCWLPFFILNCMVPFCG) traverse the membrane as a helical segment. Residues 300 to 312 (SGETKPFCIDSIT) lie on the Extracellular side of the membrane. A helical membrane pass occupies residues 313–337 (FDVFVWFGWANSSLNPIIYAFNADF). Topologically, residues 338–446 (RKAFSTLLGC…PITQNGQHPT (109 aa)) are cytoplasmic. Residues cysteine 347 and cysteine 351 are each lipidated (S-palmitoyl cysteine).

Belongs to the G-protein coupled receptor 1 family. Interacts with DNAJC14 via its C-terminus. Interacts with DRD2. Interacts with DORIP1.

It localises to the cell membrane. Its subcellular location is the endoplasmic reticulum membrane. The protein resides in the cell projection. The protein localises to the cilium membrane. It is found in the dendrite. It localises to the dendritic spine. Functionally, dopamine receptor whose activity is mediated by G proteins which activate adenylyl cyclase. The chain is D(1A) dopamine receptor (DRD1) from Bos taurus (Bovine).